Here is a 142-residue protein sequence, read N- to C-terminus: Hemoglobin subunit alpha (142 aa).

The region spanning 2-142 (VLSPADKTNV…VSTVLVSKYR (141 aa)) is the Globin domain. S4 is modified (phosphoserine). At K8 the chain carries N6-succinyllysine. T9 carries the phosphothreonine modification. Residue K12 is modified to N6-succinyllysine. Residue K17 is modified to N6-acetyllysine; alternate. K17 is modified (N6-succinyllysine; alternate). Y25 is subject to Phosphotyrosine. Position 36 is a phosphoserine (S36). K41 carries the post-translational modification N6-succinyllysine. Phosphoserine is present on S50. O2 is bound at residue H59. H88 is a heme b binding site. A Phosphoserine modification is found at S103. T109 is modified (phosphothreonine). A phosphoserine mark is found at S125 and S132. T135 bears the Phosphothreonine mark. Position 139 is a phosphoserine (S139).

Belongs to the globin family. Heterotetramer of two alpha chains and two beta chains. Red blood cells.

Functionally, involved in oxygen transport from the lung to the various peripheral tissues. Hemopressin acts as an antagonist peptide of the cannabinoid receptor CNR1. Hemopressin-binding efficiently blocks cannabinoid receptor CNR1 and subsequent signaling. This chain is Hemoglobin subunit alpha (HBA), found in Antrozous pallidus (Pallid bat).